The following is a 547-amino-acid chain: Sterol carrier protein 2 (547 aa).

Phosphoserine is present on residues Ser-3 and Ser-8. Lys-40 is subject to N6-succinyllysine. Lys-132 carries the post-translational modification N6-acetyllysine; alternate. N6-succinyllysine; alternate is present on Lys-132. Lys-168 carries the N6-succinyllysine modification. An N6-acetyllysine modification is found at Lys-177. Lys-183 bears the N6-acetyllysine; alternate mark. The residue at position 183 (Lys-183) is an N6-succinyllysine; alternate. An N6-succinyllysine mark is found at Lys-211 and Lys-282. An N6-acetyllysine; alternate mark is found at Lys-341, Lys-432, Lys-438, Lys-443, and Lys-453. Lys-341, Lys-432, Lys-438, Lys-443, and Lys-453 each carry N6-succinyllysine; alternate. The SCP2 domain occupies 433–543 (ANLIFKEIEK…KLQSLQLQPD (111 aa)). Residue Lys-464 is modified to N6-succinyllysine. Lys-470 carries the N6-acetyllysine; alternate modification. Lys-470 is subject to N6-succinyllysine; alternate. At Lys-479 the chain carries N6-succinyllysine. Lys-491 bears the N6-acetyllysine mark. Lys-492 and Lys-511 each carry N6-succinyllysine. Ser-516 bears the Phosphoserine mark. An N6-succinyllysine mark is found at Lys-522 and Lys-534. Residue Ser-537 is modified to Phosphoserine. N6-succinyllysine is present on Lys-544. Positions 545 to 547 (AKL) match the Microbody targeting signal motif.

This sequence in the N-terminal section; belongs to the thiolase-like superfamily. Thiolase family. In terms of assembly, interacts with PEX5; the interaction is essential for peroxisomal import. Post-translationally, preSCP2, a protein with a molecular mass of about 15 kDa, is processed into its mature form (SCP2) by proteolytic cleavage of a 20 residue leader sequence after translocation into peroxisomes. In terms of tissue distribution, liver &gt; intestine &gt; brain &gt; lung, colon, stomach, spleen, kidney, heart and ovary. Expressed in liver (at protein level).

It localises to the peroxisome. It is found in the cytoplasm. The protein localises to the mitochondrion. The catalysed reaction is an acyl-CoA + acetyl-CoA = a 3-oxoacyl-CoA + CoA. It carries out the reaction choloyl-CoA + propanoyl-CoA = 3alpha,7alpha,12alpha-trihydroxy-24-oxo-5beta-cholestan-26-oyl-CoA + CoA. The enzyme catalyses 4,8,12-trimethyltridecanoyl-CoA + propanoyl-CoA = 3-oxopristanoyl-CoA + CoA. It catalyses the reaction hexanoyl-CoA + acetyl-CoA = 3-oxooctanoyl-CoA + CoA. The catalysed reaction is tetradecanoyl-CoA + acetyl-CoA = 3-oxohexadecanoyl-CoA + CoA. It carries out the reaction 3-oxohexadecanedioyl-CoA + CoA = tetradecanedioyl-CoA + acetyl-CoA. The enzyme catalyses propanoyl-CoA + tetradecanoyl-CoA = 3-oxo-2-methylhexadecanoyl-CoA + CoA. It catalyses the reaction butanoyl-CoA + acetyl-CoA = 3-oxohexanoyl-CoA + CoA. The catalysed reaction is octanoyl-CoA + acetyl-CoA = 3-oxodecanoyl-CoA + CoA. It carries out the reaction decanoyl-CoA + acetyl-CoA = 3-oxododecanoyl-CoA + CoA. The enzyme catalyses dodecanoyl-CoA + acetyl-CoA = 3-oxotetradecanoyl-CoA + CoA. It catalyses the reaction hexadecanoyl-CoA + acetyl-CoA = 3-oxooctadecanoyl-CoA + CoA. The catalysed reaction is 3-oxo-(9Z-octadecenoyl)-CoA + CoA = (7Z)-hexadecenoyl-CoA + acetyl-CoA. It carries out the reaction 7-dehydrocholesterol(in) = 7-dehydrocholesterol(out). Functionally, plays a crucial role in the peroxisomal oxidation of branched-chain fatty acids. Catalyzes the last step of the peroxisomal beta-oxidation of branched chain fatty acids and the side chain of the bile acid intermediates di- and trihydroxycoprostanic acids (DHCA and THCA). Also active with medium and long straight chain 3-oxoacyl-CoAs. Stimulates the microsomal conversion of 7-dehydrocholesterol to cholesterol and transfers phosphatidylcholine and 7-dehydrocholesterol between membrances, in vitro. Isoforms SCP2 and SCPx cooperate in peroxisomal oxidation of certain naturally occurring tetramethyl-branched fatty acyl-CoAs. In terms of biological role, mediates the transfer of all common phospholipids, cholesterol and gangliosides from the endoplasmic reticulum to the plasma membrane. May play a role in regulating steroidogenesis. Stimulates the microsomal conversion of 7-dehydrocholesterol to cholesterol. Also binds fatty acids and fatty acyl Coenzyme A (CoA) such as phytanoyl-CoA. Involved in the regulation phospholipid synthesis in endoplasmic reticulum enhancing the incorporation of exogenous fatty acid into glycerides. Seems to stimulate the rate-limiting step in phosphatidic acid formation mediated by GPAT3. Isoforms SCP2 and SCPx cooperate in peroxisomal oxidation of certain naturally occurring tetramethyl-branched fatty acyl-CoAs. The chain is Sterol carrier protein 2 from Rattus norvegicus (Rat).